The following is a 392-amino-acid chain: Succinyl-diaminopimelate desuccinylase (392 aa).

H76 is a binding site for Zn(2+). D78 is an active-site residue. D107 provides a ligand contact to Zn(2+). The Proton acceptor role is filled by E143. Residues E144, E172, and H357 each contribute to the Zn(2+) site.

Belongs to the peptidase M20A family. DapE subfamily. In terms of assembly, homodimer. It depends on Zn(2+) as a cofactor. Co(2+) serves as cofactor.

It carries out the reaction N-succinyl-(2S,6S)-2,6-diaminopimelate + H2O = (2S,6S)-2,6-diaminopimelate + succinate. It functions in the pathway amino-acid biosynthesis; L-lysine biosynthesis via DAP pathway; LL-2,6-diaminopimelate from (S)-tetrahydrodipicolinate (succinylase route): step 3/3. Its function is as follows. Catalyzes the hydrolysis of N-succinyl-L,L-diaminopimelic acid (SDAP), forming succinate and LL-2,6-diaminopimelate (DAP), an intermediate involved in the bacterial biosynthesis of lysine and meso-diaminopimelic acid, an essential component of bacterial cell walls. In Helicobacter hepaticus (strain ATCC 51449 / 3B1), this protein is Succinyl-diaminopimelate desuccinylase.